The primary structure comprises 351 residues: Protein Wnt-4 (351 aa).

The first 22 residues, 1 to 22 (MSPRSCLRSLRLLVFAVFSAAA), serve as a signal peptide directing secretion. Disulfide bonds link Cys78/Cys89, Cys128/Cys136, Cys138/Cys155, Cys206/Cys220, Cys208/Cys215, Cys280/Cys311, Cys296/Cys306, Cys310/Cys350, Cys326/Cys341, Cys328/Cys338, and Cys333/Cys334. N-linked (GlcNAc...) asparagine glycosylation is present at Asn88. Ser212 carries O-palmitoleoyl serine; by PORCN lipidation. The N-linked (GlcNAc...) asparagine glycan is linked to Asn297.

This sequence belongs to the Wnt family. Interacts with PORCN. Interacts with PKD1. Post-translationally, palmitoleoylation is required for efficient binding to frizzled receptors. Depalmitoleoylation leads to Wnt signaling pathway inhibition. In terms of tissue distribution, in adults in lung and brain.

The protein localises to the secreted. The protein resides in the extracellular space. Its subcellular location is the extracellular matrix. In terms of biological role, ligand for members of the frizzled family of seven transmembrane receptors. Plays an important role in the embryonic development of the urogenital tract and the lung. Required for normal mesenchyme to epithelium transition during embryonic kidney development. Required for the formation of early epithelial renal vesicles during kidney development. Required for normal formation of the Mullerian duct in females, and normal levels of oocytes in the ovaries. Required for normal down-regulation of 3 beta-hydroxysteroid dehydrogenase in the ovary. Required for normal lung development and for normal patterning of trachael cartilage rings. This is Protein Wnt-4 (Wnt4) from Mus musculus (Mouse).